We begin with the raw amino-acid sequence, 148 residues long: uncharacterized protein (148 aa).

A signal peptide spans 1 to 22; it reads MVQTVLNSVWLWRSVLLRLTFS.

This is an uncharacterized protein from Saccharomyces cerevisiae (strain ATCC 204508 / S288c) (Baker's yeast).